Here is a 221-residue protein sequence, read N- to C-terminus: UPF0758 protein CGSHiEE_07200 (221 aa).

The region spanning 99–221 (IINDPETVKL…CYSFAENCLL (123 aa)) is the MPN domain. The Zn(2+) site is built by His170, His172, and Asp183. The JAMM motif signature appears at 170–183 (HNHPSGVTEPSYSD).

The protein belongs to the UPF0758 family.

This Haemophilus influenzae (strain PittEE) protein is UPF0758 protein CGSHiEE_07200.